We begin with the raw amino-acid sequence, 452 residues long: Phosphoglucosamine mutase (452 aa).

The active-site Phosphoserine intermediate is S104. Mg(2+) contacts are provided by S104, D241, D243, and D245. A Phosphoserine modification is found at S104.

This sequence belongs to the phosphohexose mutase family. Requires Mg(2+) as cofactor. Post-translationally, activated by phosphorylation.

It catalyses the reaction alpha-D-glucosamine 1-phosphate = D-glucosamine 6-phosphate. Its function is as follows. Catalyzes the conversion of glucosamine-6-phosphate to glucosamine-1-phosphate. This chain is Phosphoglucosamine mutase, found in Arthrobacter sp. (strain FB24).